The sequence spans 332 residues: Formamidase (332 aa).

The CN hydrolase domain occupies 14-259 (FLTALIQYPV…WEIVTAEVYP (246 aa)). The Proton acceptor role is filled by Glu60. Catalysis depends on Lys132, which acts as the Proton donor. Residue Cys165 is the Nucleophile of the active site.

It belongs to the carbon-nitrogen hydrolase superfamily. Aliphatic amidase family.

It catalyses the reaction formamide + H2O = formate + NH4(+). In terms of biological role, is an aliphatic amidase with a restricted substrate specificity, as it only hydrolyzes formamide. This Bacillus thuringiensis (strain Al Hakam) protein is Formamidase.